Reading from the N-terminus, the 125-residue chain is Fluoride-specific ion channel FluC (125 aa).

Transmembrane regions (helical) follow at residues 4 to 24 (IALV…VGVW), 35 to 55 (WGTL…VELV), 68 to 88 (FLVT…LDAV), and 100 to 120 (AFYI…GLAL). Positions 75 and 78 each coordinate Na(+).

Belongs to the fluoride channel Fluc/FEX (TC 1.A.43) family.

It localises to the cell inner membrane. The catalysed reaction is fluoride(in) = fluoride(out). Na(+) is not transported, but it plays an essential structural role and its presence is essential for fluoride channel function. Fluoride-specific ion channel. Important for reducing fluoride concentration in the cell, thus reducing its toxicity. This Agrobacterium fabrum (strain C58 / ATCC 33970) (Agrobacterium tumefaciens (strain C58)) protein is Fluoride-specific ion channel FluC.